Reading from the N-terminus, the 399-residue chain is S-adenosylmethionine synthase (399 aa).

An ATP-binding site is contributed by His17. A Mg(2+)-binding site is contributed by Asp19. Residue Glu45 participates in K(+) binding. Positions 58 and 101 each coordinate L-methionine. The flexible loop stretch occupies residues 101 to 111; it reads QSPDIAQGVDE. ATP-binding positions include 177 to 179, 244 to 245, Asp253, 259 to 260, Ala276, and Lys280; these read DAK, RF, and RK. Asp253 contacts L-methionine. An L-methionine-binding site is contributed by Lys284.

Belongs to the AdoMet synthase family. In terms of assembly, homotetramer; dimer of dimers. Mg(2+) serves as cofactor. The cofactor is K(+).

The protein localises to the cytoplasm. It catalyses the reaction L-methionine + ATP + H2O = S-adenosyl-L-methionine + phosphate + diphosphate. It participates in amino-acid biosynthesis; S-adenosyl-L-methionine biosynthesis; S-adenosyl-L-methionine from L-methionine: step 1/1. In terms of biological role, catalyzes the formation of S-adenosylmethionine (AdoMet) from methionine and ATP. The overall synthetic reaction is composed of two sequential steps, AdoMet formation and the subsequent tripolyphosphate hydrolysis which occurs prior to release of AdoMet from the enzyme. The sequence is that of S-adenosylmethionine synthase from Listeria monocytogenes serotype 4b (strain CLIP80459).